Consider the following 491-residue polypeptide: Cobyric acid synthase (491 aa).

In terms of domain architecture, GATase cobBQ-type spans 250-437 (QLRVVVPVLP…VHGVFDHPQA (188 aa)). The active-site Nucleophile is the cysteine 331. Histidine 429 is a catalytic residue.

It belongs to the CobB/CobQ family. CobQ subfamily.

The protein operates within cofactor biosynthesis; adenosylcobalamin biosynthesis. Functionally, catalyzes amidations at positions B, D, E, and G on adenosylcobyrinic A,C-diamide. NH(2) groups are provided by glutamine, and one molecule of ATP is hydrogenolyzed for each amidation. The polypeptide is Cobyric acid synthase (Xanthomonas axonopodis pv. citri (strain 306)).